A 197-amino-acid polypeptide reads, in one-letter code: MNGGGKAEKENTPSEANLQEEEVRTLFVSGLPLDIKPRELYLLFRPFKGYEGSLIKLTSKQPVGFVSFDSRSEAEAAKNALNGIRFDPEIPQTLRLEFAKANTKMAKNKLVGTPNPSTPLPNTVPQFIAREPYELTVPALYPSSPEVWAPYPLYPAELAPALPPPAAFTYPASLHAQMRWIPPSEATSQGWKSRQFC.

Position 1 is an N-acetylmethionine (Met-1). Thr-12 is subject to Phosphothreonine. Residues 24-101 (RTLFVSGLPL…QTLRLEFAKA (78 aa)) enclose the RRM domain. The interaction with RNA stretch occupies residues 98-105 (FAKANTKM). The residue at position 113 (Thr-113) is a Phosphothreonine.

As to quaternary structure, homodimer; each protein chain binds one RNA molecule via the external surface of the homodimer. Interacts with RNA binding proteins MBNL1, RBFOX2, RBM4 and RBM14; the interaction allows cooperative assembly of stable cell-specific alternative splicing regulatory complexes. Also interacts with RBM47, MATR3 and ESRP2. Interacts with SMAD2, SMAD3 and SMAD4; the interactions are direct. As to expression, mRNA expressed in developing heart, with significantly higher expression in the atria relative to the ventricles.

The protein localises to the nucleus. Its subcellular location is the cytoplasm. It is found in the stress granule. The protein resides in the P-body. Its function is as follows. RNA binding protein that mediates the regulation of pre-mRNA alternative splicing (AS). Acts either as activator (FLNB, HSPG2, LIPA1, MYOCD, PTPRF and PPFIBP1) or repressor (TPM1, ACTN1, ITGA7, PIEZO1, LSM14B, MBNL1 and MBML2) of splicing events on specific pre-mRNA targets. Together with RNA binding proteins RBFOX2 and MBNL1/2, activates a splicing program associated with differentiated contractile vascular smooth muscle cells (SMC) by regulating AS of numerous pre-mRNA involved in actin cytoskeleton and focal adhesion machineries, suggesting a role in promoting a cell differentiated state. Binds to introns, exons and 3'-UTR associated with tandem CAC trinucleotide motifs separated by a variable spacer region, at a minimum as a dimer. The minimal length of RNA required for RBPMS-binding tandem CAC motifs is 15 nt, with spacing ranging from 1 to 9 nt. Can also bind to CA dinucleotide repeats. Mediates repression of TPM1 exon 3 by binding to CAC tandem repeats in the flanking intronic regions, followed by higher-order oligomerization and heterotypic interactions with other splicing regulators including MBNL1 and RBFOX2, which prevents assembly of ATP-dependent splicing complexes. The polypeptide is RNA-binding protein with multiple splicing (Mus musculus (Mouse)).